Consider the following 99-residue polypeptide: UPF0125 protein BU253 (99 aa).

This sequence belongs to the UPF0125 (RnfH) family.

The protein is UPF0125 protein BU253 of Buchnera aphidicola subsp. Acyrthosiphon pisum (strain APS) (Acyrthosiphon pisum symbiotic bacterium).